The chain runs to 211 residues: Protein-methionine-sulfoxide reductase heme-binding subunit MsrQ (211 aa).

Helical transmembrane passes span 10–30 (WLKV…VWAI), 54–74 (FLLA…PLLI), 82–102 (LWCF…ELGV), 116–136 (PYLT…FTST), 153–173 (FVYL…KIIS), and 178–198 (IYAG…LSLF).

It belongs to the MsrQ family. In terms of assembly, heterodimer of a catalytic subunit (MsrP) and a heme-binding subunit (MsrQ). The cofactor is FMN. It depends on heme b as a cofactor.

It is found in the cell inner membrane. In terms of biological role, part of the MsrPQ system that repairs oxidized periplasmic proteins containing methionine sulfoxide residues (Met-O), using respiratory chain electrons. Thus protects these proteins from oxidative-stress damage caused by reactive species of oxygen and chlorine generated by the host defense mechanisms. MsrPQ is essential for the maintenance of envelope integrity under bleach stress, rescuing a wide series of structurally unrelated periplasmic proteins from methionine oxidation, including the primary periplasmic chaperone SurA and the lipoprotein Pal. MsrQ provides electrons for reduction to the reductase catalytic subunit MsrP, using the quinone pool of the respiratory chain. The polypeptide is Protein-methionine-sulfoxide reductase heme-binding subunit MsrQ (Escherichia coli O6:H1 (strain CFT073 / ATCC 700928 / UPEC)).